Here is a 1450-residue protein sequence, read N- to C-terminus: ABC transporter G family member 37 (1450 aa).

Residues Val-175 to Glu-447 enclose the ABC transporter 1 domain. Gly-207 to Thr-214 lines the ATP pocket. The ABC transmembrane type-2 1 domain maps to Glu-525–Phe-737. Helical transmembrane passes span Val-544 to Ile-564, Ala-581 to Ala-601, Phe-615 to Phe-635, Phe-661 to Ile-681, Ala-687 to Ile-707, and Leu-773 to Phe-793. A disordered region spans residues Ser-810–Glu-838. Residues Lys-817–Glu-838 show a composition bias toward basic and acidic residues. The ABC transporter 2 domain occupies Val-850–Glu-1103. Residue Gly-895–Thr-902 participates in ATP binding. Positions Gly-1175–Tyr-1389 constitute an ABC transmembrane type-2 2 domain. The next 7 membrane-spanning stretches (helical) occupy residues Tyr-1194–Trp-1214, Met-1226–Ala-1246, Ile-1282–Phe-1302, Leu-1313–Ile-1333, Val-1339–Ile-1359, Pro-1365–Ile-1385, and Val-1422–Val-1442.

It belongs to the ABC transporter superfamily. ABCG family. PDR (TC 3.A.1.205) subfamily. As to expression, expressed in roots and, to a lower extent, in seedlings.

The protein localises to the cell membrane. In terms of biological role, together with ABCG36, regulates auxin homeostasis and responses by playing a dual role in coumarin (and derivatives) and in the auxin precursor indole 3-butyric acid (IBA) efflux transport, thus influencing roots and root hairs development. Mediates coumarin exudation in the rhizosphere, especially in iron (Fe) deficient conditions, with a strong specificity for highly oxygenated compounds such as scopoletin and derivatives, dihydroxyscopoletin, esculetin, fraxin, fraxetin and esculin; these molecules improve plant Fe nutrition. Involved in the cellular detoxification of xenobiotics by promoting the excretion of some auxinic herbicides including 2,4-dichlorophenoxyacetic acid (2,4-D), 4-(2,4-dichlorophenoxy)butyric acid (2,4-DB) and other members of the phenoxyalkanoic acid family as well as the polar auxin transport inhibitor, napthylphthalamic acid (NPA). May be a general defense protein. The sequence is that of ABC transporter G family member 37 from Arabidopsis thaliana (Mouse-ear cress).